A 289-amino-acid polypeptide reads, in one-letter code: ATP synthase gamma chain (289 aa).

Belongs to the ATPase gamma chain family. As to quaternary structure, F-type ATPases have 2 components, CF(1) - the catalytic core - and CF(0) - the membrane proton channel. CF(1) has five subunits: alpha(3), beta(3), gamma(1), delta(1), epsilon(1). CF(0) has three main subunits: a, b and c.

It localises to the cell membrane. In terms of biological role, produces ATP from ADP in the presence of a proton gradient across the membrane. The gamma chain is believed to be important in regulating ATPase activity and the flow of protons through the CF(0) complex. The polypeptide is ATP synthase gamma chain (Mycoplasmopsis synoviae (strain 53) (Mycoplasma synoviae)).